The primary structure comprises 341 residues: 3-dehydroquinate synthase (341 aa).

Residues 54–59 (DGEKYK), 88–92 (GVVTD), 112–113 (TT), lysine 125, lysine 133, and 151–154 (TLST) contribute to the NAD(+) site. The Zn(2+) site is built by glutamate 166, histidine 220, and histidine 236.

The protein belongs to the sugar phosphate cyclases superfamily. Dehydroquinate synthase family. Requires NAD(+) as cofactor. The cofactor is Co(2+). It depends on Zn(2+) as a cofactor.

It localises to the cytoplasm. It carries out the reaction 7-phospho-2-dehydro-3-deoxy-D-arabino-heptonate = 3-dehydroquinate + phosphate. It participates in metabolic intermediate biosynthesis; chorismate biosynthesis; chorismate from D-erythrose 4-phosphate and phosphoenolpyruvate: step 2/7. Its function is as follows. Catalyzes the conversion of 3-deoxy-D-arabino-heptulosonate 7-phosphate (DAHP) to dehydroquinate (DHQ). The chain is 3-dehydroquinate synthase from Thermococcus kodakarensis (strain ATCC BAA-918 / JCM 12380 / KOD1) (Pyrococcus kodakaraensis (strain KOD1)).